A 438-amino-acid chain; its full sequence is Putative truncated GMC-type inactive oxidoreductase L894 (438 aa).

The N-terminal stretch at 1-26 (MYVFLLFSRYKIFYVYIKKMAHRSRC) is a signal peptide. 79-109 (DIVIIGAGAAGCVLAYYLTKFSDLKIILLEA) contacts FAD.

It belongs to the GMC oxidoreductase family. FAD is required as a cofactor.

Its subcellular location is the virion. The chain is Putative truncated GMC-type inactive oxidoreductase L894 from Acanthamoeba polyphaga (Amoeba).